The primary structure comprises 557 residues: Protein Red (557 aa).

A disordered region spans residues 1–90 (MPERDSEPFS…YAKLRQQEIE (90 aa)). Basic and acidic residues predominate over residues 16 to 25 (DGHDVDDPHS). Residues 42–53 (TPRAAPTSAPPS) are compositionally biased toward low complexity. N6-acetyllysine occurs at positions 98 and 137. Lys151 participates in a covalent cross-link: Glycyl lysine isopeptide (Lys-Gly) (interchain with G-Cter in SUMO2). The tract at residues 181-205 (KEKEEEELMEKPQKETKKDEDPENK) is disordered. A Phosphoserine modification is found at Ser287. A compositionally biased stretch (basic residues) spans 294 to 303 (RNKKLKKKDK). The interval 294 to 402 (RNKKLKKKDK…PMDVDKGPGS (109 aa)) is disordered. Residues 304-313 (GKLEEKKPPE) show a composition bias toward basic and acidic residues. Residues Lys310 and Lys331 each participate in a glycyl lysine isopeptide (Lys-Gly) (interchain with G-Cter in SUMO2) cross-link. Over residues 332 to 398 (TPRDKERERY…VDDEPMDVDK (67 aa)) the composition is skewed to basic and acidic residues. 17 consecutive repeat copies span residues 342–343 (RE), 344–345 (RE), 346–347 (RD), 348–349 (RE), 350–351 (RD), 352–353 (RD), 354–355 (RE), 356–357 (RD), 358–359 (RE), 360–361 (RD), 362–363 (RE), 364–365 (RE), 366–367 (RE), 368–369 (RD), 370–371 (RE), 372–373 (RE), and 374–375 (RE). Residues 342–375 (RERERDRERDRDRERDRERDRERERERDRERERE) form a 17 X 2 AA tandem repeats of R-[ED] region. Glycyl lysine isopeptide (Lys-Gly) (interchain with G-Cter in SUMO2) cross-links involve residues Lys386, Lys388, Lys404, and Lys408. Phosphoserine occurs at positions 417 and 460. Residue Thr485 is modified to Phosphothreonine. Glycyl lysine isopeptide (Lys-Gly) (interchain with G-Cter in SUMO2) cross-links involve residues Lys496, Lys501, and Lys509. Ser536 carries the post-translational modification Phosphoserine. Glycyl lysine isopeptide (Lys-Gly) (interchain with G-Cter in SUMO2) cross-links involve residues Lys541, Lys543, Lys544, and Lys553.

The protein belongs to the RED family. As to quaternary structure, component of the spliceosome B complex. Interacts with SMU1. Interacts with MAD1L1. May interact with DHX15.

It is found in the nucleus. The protein resides in the nucleoplasm. Its subcellular location is the chromosome. The protein localises to the cytoplasm. It localises to the cytoskeleton. It is found in the spindle pole. Functionally, involved in pre-mRNA splicing as a component of the spliceosome. Auxiliary spliceosomal protein that regulates selection of alternative splice sites in a small set of target pre-mRNA species. Required for normal mitotic cell cycle progression. Recruits MAD1L1 and MAD2L1 to kinetochores, and is required to trigger the spindle assembly checkpoint. Required for normal accumulation of SMU1. This chain is Protein Red (Ik), found in Rattus norvegicus (Rat).